Consider the following 491-residue polypeptide: Cell division control protein 1 (491 aa).

Residues 1–33 (MVYRNRSKSVLSTHSKKSDDKAHYKSRSKKKSK) are disordered. The Cytoplasmic portion of the chain corresponds to 1 to 39 (MVYRNRSKSVLSTHSKKSDDKAHYKSRSKKKSKSRSKKR). Over residues 24 to 33 (YKSRSKKKSK) the composition is skewed to basic residues. Residues 40 to 60 (LRIYWRYISIVWILWLGLISY) traverse the membrane as a helical segment. Residues 61 to 391 (YESVVVKRAM…LCYMPDPYKA (331 aa)) lie on the Extracellular side of the membrane. Positions 95, 144, 183, and 323 each coordinate a divalent metal cation. The helical transmembrane segment at 392–412 (IRMYLWGLLFSAAFIAYMHFF) threads the bilayer. Topologically, residues 413–465 (PKSFNNRVATIMNRVFTRPDGNTSDLPLPTSISKSKSKKSLTHSKYAVNDTRS) are cytoplasmic. Residues 466–486 (IKQFLVNAIVLFVSVMPIFIY) form a helical membrane-spanning segment. The Extracellular segment spans residues 487–491 (FYTVV).

The protein belongs to the metallophosphoesterase superfamily. MPPE1 family. A divalent metal cation serves as cofactor.

The protein resides in the membrane. In terms of biological role, probable metallophosphoesterase which may participate in recombinational repair of double -strand breaks. The polypeptide is Cell division control protein 1 (CDC1) (Saccharomyces cerevisiae (strain ATCC 204508 / S288c) (Baker's yeast)).